The following is a 129-amino-acid chain: Glycine cleavage system H protein (129 aa).

Positions glutamate 24 to lysine 106 constitute a Lipoyl-binding domain. The residue at position 65 (lysine 65) is an N6-lipoyllysine.

It belongs to the GcvH family. As to quaternary structure, the glycine cleavage system is composed of four proteins: P, T, L and H. Requires (R)-lipoate as cofactor.

In terms of biological role, the glycine cleavage system catalyzes the degradation of glycine. The H protein shuttles the methylamine group of glycine from the P protein to the T protein. The chain is Glycine cleavage system H protein from Aeromonas salmonicida (strain A449).